A 114-amino-acid polypeptide reads, in one-letter code: T cell receptor beta variable 6-4 (114 aa).

Positions 1–21 (MSIRLLCCVAFSLLWAGPVTA) are cleaved as a signal peptide. One can recognise an Ig-like domain in the interval 22–114 (GITQAPTSQI…TSVYFCASSD (93 aa)). Cys-42 and Cys-110 are disulfide-bonded.

Alpha-beta TR is a heterodimer composed of an alpha and beta chain; disulfide-linked. The alpha-beta TR is associated with the transmembrane signaling CD3 coreceptor proteins to form the TR-CD3 (TcR or TCR). The assembly of alpha-beta TR heterodimers with CD3 occurs in the endoplasmic reticulum where a single alpha-beta TR heterodimer associates with one CD3D-CD3E heterodimer, one CD3G-CD3E heterodimer and one CD247 homodimer forming a stable octameric structure. CD3D-CD3E and CD3G-CD3E heterodimers preferentially associate with TR alpha and TR beta chains, respectively. The association of the CD247 homodimer is the last step of TcR assembly in the endoplasmic reticulum and is required for transport to the cell surface.

Its subcellular location is the cell membrane. V region of the variable domain of T cell receptor (TR) beta chain that participates in the antigen recognition. Alpha-beta T cell receptors are antigen specific receptors which are essential to the immune response and are present on the cell surface of T lymphocytes. Recognize peptide-major histocompatibility (MH) (pMH) complexes that are displayed by antigen presenting cells (APC), a prerequisite for efficient T cell adaptive immunity against pathogens. Binding of alpha-beta TR to pMH complex initiates TR-CD3 clustering on the cell surface and intracellular activation of LCK that phosphorylates the ITAM motifs of CD3G, CD3D, CD3E and CD247 enabling the recruitment of ZAP70. In turn ZAP70 phosphorylates LAT, which recruits numerous signaling molecules to form the LAT signalosome. The LAT signalosome propagates signal branching to three major signaling pathways, the calcium, the mitogen-activated protein kinase (MAPK) kinase and the nuclear factor NF-kappa-B (NF-kB) pathways, leading to the mobilization of transcription factors that are critical for gene expression and essential for T cell growth and differentiation. The T cell repertoire is generated in the thymus, by V-(D)-J rearrangement. This repertoire is then shaped by intrathymic selection events to generate a peripheral T cell pool of self-MH restricted, non-autoaggressive T cells. Post-thymic interaction of alpha-beta TR with the pMH complexes shapes TR structural and functional avidity. This chain is T cell receptor beta variable 6-4, found in Homo sapiens (Human).